The following is a 531-amino-acid chain: Ultra-long-chain fatty acid omega-hydroxylase (531 aa).

The Lumenal portion of the chain corresponds to 1–22; the sequence is MLPITDRLLHLLGLEKTAFRIY. A helical membrane pass occupies residues 23–43; it reads AVSTLLLFLLFFLFRLLLRFL. Topologically, residues 44–531 are cytoplasmic; the sequence is RLCRSFYITC…LKVEPLPPRA (488 aa). Heme is bound by residues Glu335 and Cys475.

The protein belongs to the cytochrome P450 family. Heme is required as a cofactor.

The protein localises to the endoplasmic reticulum membrane. It is found in the microsome membrane. The enzyme catalyses triacontanoate + reduced [NADPH--hemoprotein reductase] + O2 = omega-hydroxy-triacontanoate + oxidized [NADPH--hemoprotein reductase] + H2O + H(+). It carries out the reaction an omega-methyl-ultra-long-chain fatty acid + reduced [NADPH--hemoprotein reductase] + O2 = an omega-hydroxy-ultra-long-chain fatty acid + oxidized [NADPH--hemoprotein reductase] + H2O + H(+). A cytochrome P450 monooxygenase involved in epidermal ceramide biosynthesis. Hydroxylates the terminal carbon (omega-hydroxylation) of ultra-long-chain fatty acyls (C28-C36) prior to ceramide synthesis. Contributes to the synthesis of three classes of omega-hydroxy-ultra-long chain fatty acylceramides having sphingosine, 6-hydroxysphingosine and phytosphingosine bases, all major lipid components that underlie the permeability barrier of the stratum corneum. Mechanistically, uses molecular oxygen inserting one oxygen atom into a substrate, and reducing the second into a water molecule, with two electrons provided by NADPH via cytochrome P450 reductase (CPR; NADPH-ferrihemoprotein reductase). The protein is Ultra-long-chain fatty acid omega-hydroxylase of Homo sapiens (Human).